The sequence spans 427 residues: Methylenetetrahydrofolate--tRNA-(uracil-5-)-methyltransferase TrmFO (427 aa).

6-11 is an FAD binding site; sequence GAGLAG.

The protein belongs to the MnmG family. TrmFO subfamily. It depends on FAD as a cofactor.

It is found in the cytoplasm. It carries out the reaction uridine(54) in tRNA + (6R)-5,10-methylene-5,6,7,8-tetrahydrofolate + NADH + H(+) = 5-methyluridine(54) in tRNA + (6S)-5,6,7,8-tetrahydrofolate + NAD(+). It catalyses the reaction uridine(54) in tRNA + (6R)-5,10-methylene-5,6,7,8-tetrahydrofolate + NADPH + H(+) = 5-methyluridine(54) in tRNA + (6S)-5,6,7,8-tetrahydrofolate + NADP(+). Catalyzes the folate-dependent formation of 5-methyl-uridine at position 54 (M-5-U54) in all tRNAs. The chain is Methylenetetrahydrofolate--tRNA-(uracil-5-)-methyltransferase TrmFO from Acholeplasma laidlawii (strain PG-8A).